A 401-amino-acid polypeptide reads, in one-letter code: Argininosuccinate synthase (401 aa).

9–17 (AYSGGLDTS) contributes to the ATP binding site. Residue Tyr-86 coordinates L-citrulline. Gly-116 provides a ligand contact to ATP. L-aspartate-binding residues include Thr-118, Asn-122, and Asp-123. Residue Asn-122 coordinates L-citrulline. Positions 126, 174, 183, 259, and 271 each coordinate L-citrulline.

The protein belongs to the argininosuccinate synthase family. Type 1 subfamily. In terms of assembly, homotetramer.

The protein localises to the cytoplasm. The catalysed reaction is L-citrulline + L-aspartate + ATP = 2-(N(omega)-L-arginino)succinate + AMP + diphosphate + H(+). It functions in the pathway amino-acid biosynthesis; L-arginine biosynthesis; L-arginine from L-ornithine and carbamoyl phosphate: step 2/3. The chain is Argininosuccinate synthase from Bacillus thuringiensis subsp. konkukian (strain 97-27).